Reading from the N-terminus, the 141-residue chain is Nucleoside diphosphate kinase (141 aa).

6 residues coordinate ATP: Lys11, Phe59, Arg87, Thr93, Arg104, and Asn114. His117 serves as the catalytic Pros-phosphohistidine intermediate.

Belongs to the NDK family. In terms of assembly, homotetramer. It depends on Mg(2+) as a cofactor.

It is found in the cytoplasm. The enzyme catalyses a 2'-deoxyribonucleoside 5'-diphosphate + ATP = a 2'-deoxyribonucleoside 5'-triphosphate + ADP. The catalysed reaction is a ribonucleoside 5'-diphosphate + ATP = a ribonucleoside 5'-triphosphate + ADP. Its function is as follows. Major role in the synthesis of nucleoside triphosphates other than ATP. The ATP gamma phosphate is transferred to the NDP beta phosphate via a ping-pong mechanism, using a phosphorylated active-site intermediate. The polypeptide is Nucleoside diphosphate kinase (Albidiferax ferrireducens (strain ATCC BAA-621 / DSM 15236 / T118) (Rhodoferax ferrireducens)).